Consider the following 263-residue polypeptide: Metaxin-2 (263 aa).

N-acetylserine is present on S2.

This sequence belongs to the metaxin family. In terms of assembly, interacts with MTX1/metaxin-1. Associates with the mitochondrial contact site and cristae organizing system (MICOS) complex, composed of at least MICOS10/MIC10, CHCHD3/MIC19, CHCHD6/MIC25, APOOL/MIC27, IMMT/MIC60, APOO/MIC23/MIC26 and QIL1/MIC13. This complex was also known under the names MINOS or MitOS complex. The MICOS complex associates with mitochondrial outer membrane proteins SAMM50, MTX1 and MTX2 (together described as components of the mitochondrial outer membrane sorting assembly machinery (SAM) complex) and DNAJC11, mitochondrial inner membrane protein TMEM11 and with HSPA9. The MICOS and SAM complexes together with DNAJC11 are part of a large protein complex spanning both membranes termed the mitochondrial intermembrane space bridging (MIB) complex.

The protein localises to the mitochondrion outer membrane. It localises to the mitochondrion. In terms of biological role, involved in transport of proteins into the mitochondrion. The chain is Metaxin-2 (MTX2) from Homo sapiens (Human).